Consider the following 563-residue polypeptide: CTP synthase (563 aa).

The amidoligase domain stretch occupies residues 1 to 278; sequence MAKATAKNSA…DLRVLEQLHL (278 aa). Ser-24 contributes to the CTP binding site. Ser-24 is a binding site for UTP. ATP is bound at residue 25–30; the sequence is SLGKGI. Residue Tyr-65 participates in L-glutamine binding. Asp-82 contacts ATP. Mg(2+)-binding residues include Asp-82 and Glu-151. CTP contacts are provided by residues 158 to 160, 198 to 203, and Lys-234; these read DIE and KTKPSQ. UTP is bound by residues 198–203 and Lys-234; that span reads KTKPSQ. ATP is bound at residue 250-252; it reads KDV. A Glutamine amidotransferase type-1 domain is found at 303 to 545; that stretch reads TIALVGKYIA…VKAALEQKKA (243 aa). Gly-363 contributes to the L-glutamine binding site. The active-site Nucleophile; for glutamine hydrolysis is Cys-390. L-glutamine is bound by residues 391-394, Glu-414, and Arg-471; that span reads LGMQ. Catalysis depends on residues His-518 and Glu-520. Positions 542–563 are disordered; that stretch reads QKKANGKKPTAPSEKTKKTKTK.

Belongs to the CTP synthase family. Homotetramer.

The catalysed reaction is UTP + L-glutamine + ATP + H2O = CTP + L-glutamate + ADP + phosphate + 2 H(+). It carries out the reaction L-glutamine + H2O = L-glutamate + NH4(+). The enzyme catalyses UTP + NH4(+) + ATP = CTP + ADP + phosphate + 2 H(+). Its pathway is pyrimidine metabolism; CTP biosynthesis via de novo pathway; CTP from UDP: step 2/2. Its activity is regulated as follows. Allosterically activated by GTP, when glutamine is the substrate; GTP has no effect on the reaction when ammonia is the substrate. The allosteric effector GTP functions by stabilizing the protein conformation that binds the tetrahedral intermediate(s) formed during glutamine hydrolysis. Inhibited by the product CTP, via allosteric rather than competitive inhibition. Functionally, catalyzes the ATP-dependent amination of UTP to CTP with either L-glutamine or ammonia as the source of nitrogen. Regulates intracellular CTP levels through interactions with the four ribonucleotide triphosphates. The protein is CTP synthase of Fibrobacter succinogenes (strain ATCC 19169 / S85).